The sequence spans 364 residues: Urease accessory protein UreD (364 aa).

Disordered stretches follow at residues 1-37 (MDQDRSGAADAGNPDPGRGPAGSAEARNGAAAASSPA) and 201-250 (PPEV…AGER). 3 stretches are compositionally biased toward low complexity: residues 21 to 37 (AGSAEARNGAAAASSPA), 209 to 218 (APDRGAPAAE), and 236 to 248 (AASSGGTGAAPAG).

Belongs to the UreD family. UreD, UreF and UreG form a complex that acts as a GTP-hydrolysis-dependent molecular chaperone, activating the urease apoprotein by helping to assemble the nickel containing metallocenter of UreC. The UreE protein probably delivers the nickel.

It localises to the cytoplasm. Required for maturation of urease via the functional incorporation of the urease nickel metallocenter. In Kocuria rhizophila (strain ATCC 9341 / DSM 348 / NBRC 103217 / DC2201), this protein is Urease accessory protein UreD.